The following is a 492-amino-acid chain: MATFKDACFHYRRITKLNRELLRIGANSVWTPVSTNKIKGWCVECCQLTELTFCHGCSLAHVCQWCIQNKRCFLDNEPHLLKLRTFESPITKEKLQCIINLYNMLFPINSSIINKFRKTVKQRKCRNEIDRSWYNQLLLPITLNAAVFKFHSREVYIFGFYEGSSSCVNLPYRLVNCIDLYDKLLLDQINFDRMSSLPANLQSIYANKYFKLSRLPSMKLKQIYYSDFSKQNLVNKYKSKSRMVLRNLTEFTWDSQLNLHYDLLNNKDKILAALSTSSLKQFETHDLNLGRIKADVFELGRHCKPNYISSNHWQPASTISQCKWCNVKYAFRNMDWKMESMYNELLSFIQSCYKSNVNVGHCSSIERVYPLVKDILWHSITKYLDQTIEKLFNAMNPVQVNDQKVISFHWQIDIALYTHIKMILKTEALPFTFTLHQFNSIIKGIVNQWCNVSELDDLPLCTEQTDTLVRLEEEGKLAEEYELLISDSEDDD.

Residues 1 to 81 (MATFKDACFH…CFLDNEPHLL (81 aa)) form an RNA-binding region. The tract at residues 42 to 79 (CVECCQLTELTFCHGCSLAHVCQWCIQNKRCFLDNEPH) is zinc-binding domain. Residues 82–176 (KLRTFESPIT…CVNLPYRLVN (95 aa)) are important for cytoskeleton localization. The tract at residues 318–492 (TISQCKWCNV…LLISDSEDDD (175 aa)) is interaction with host IRF3. Residues 483–486 (LLIS) carry the pLxIS motif motif.

Belongs to the rotavirus NSP1 family. As to quaternary structure, interacts (via C-terminus) with host IRF3; this interaction leads to IRF3 degradation. Interacts with host IRF7; this interaction leads to IRF7 degradation. Interacts with host CUL1 and CUL3.

Its subcellular location is the host cytoplasm. The protein resides in the host cytoskeleton. Functionally, plays a role in the inhibition of host innate immunity by inducing the degradation of key host factors required to activate interferon production such as IRF3, IRF5 or IRF7. Associates with components of cullin RING ligases (CRLs) including CUL1 or CUL3, which are essential multisubunit ubiquitination complexes, to modulate their activities. This is Non-structural protein 1 from Homo sapiens (Human).